The chain runs to 478 residues: Vitronectin (478 aa).

The signal sequence occupies residues 1 to 19; that stretch reads MAPLRPLLILALLAWVALA. The SMB domain occupies 20–63; sequence DQESCKGRCTEGFNVDKKCQCDELCSYYQSCCTDYTAECKPQVT. 7 cysteine pairs are disulfide-bonded: cysteine 24–cysteine 28, cysteine 24–cysteine 40, cysteine 28–cysteine 58, cysteine 38–cysteine 40, cysteine 38–cysteine 51, cysteine 44–cysteine 50, and cysteine 51–cysteine 58. The Cell attachment site motif lies at 64-66; the sequence is RGD. Threonine 69 is modified (phosphothreonine; by CK2; in vitro). A Sulfotyrosine modification is found at tyrosine 75. Threonine 76 is modified (phosphothreonine; by CK2; in vitro). Tyrosine 78 bears the Sulfotyrosine mark. Residue asparagine 86 is glycosylated (N-linked (GlcNAc...) (complex) asparagine). A disordered region spans residues 91-158; that stretch reads EQVGGPSLTS…PPAEEELCSG (68 aa). Over residues 97-112 the composition is skewed to polar residues; it reads SLTSDLQAQSKGNPEQ. Serine 130 and serine 137 each carry phosphoserine. Residues 133 to 143 are compositionally biased toward basic and acidic residues; the sequence is EGIDSRPETLH. 3 Hemopexin repeats span residues 158-202, 203-250, and 251-305; these read GKPF…VWGI, EGPI…FDGI, and PDNV…FEHF. N-linked (GlcNAc...) asparagine glycosylation occurs at asparagine 169. The N-linked (GlcNAc...) (complex) asparagine glycan is linked to asparagine 242. Tyrosine 282 is subject to Sulfotyrosine. Cysteine 293 and cysteine 430 are disulfide-bonded. The residue at position 312 (serine 312) is a Phosphoserine. The tract at residues 362-395 is heparin-binding; sequence RPSLAKKQRFRHRNRKGYRSQRGHSRGRNQNSRR. The tract at residues 364-398 is disordered; the sequence is SLAKKQRFRHRNRKGYRSQRGHSRGRNQNSRRPSR. Residues 365–388 show a composition bias toward basic residues; it reads LAKKQRFRHRNRKGYRSQRGHSRG. A Phosphoserine; by PKA modification is found at serine 397. 2 positions are modified to sulfotyrosine: tyrosine 417 and tyrosine 420. Residues 419–472 form a Hemopexin 4 repeat; that stretch reads DYRMDWLVPATCEPIQSVFFFSGDKYYRVNLRTRRVDTVDPPYPRSIAQYWLGC.

As to quaternary structure, exists in two forms: a single chain 75 kDa form (V75) and a clipped form composed of two chains (65 kDa and 10 kDa) (V65+V10) which are held together by a disulfide bond. Interacts with SERPINE1/PAI1, insulin and C1QBP. (Microbial infection) Interacts (via hemopexin repeat 2) with P.falciparum (isolate CDC / Honduras) SERA5 P47 (via C-terminus); may form heterotetramers of two VTN and SERA5 P47 heterodimers; the interaction may protect merozoites from phagocytosis by host monocytes; VTN glycosylation appears to be dispensable for the interaction. Sulfated on tyrosine residues. Post-translationally, N- and O-glycosylated. In terms of processing, phosphorylation on Thr-69 and Thr-76 favors cell adhesion and spreading. It has been suggested that the active SMB domain may be permitted considerable disulfide bond heterogeneity or variability, thus two alternate disulfide patterns based on 3D structures are described with 1 disulfide bond conserved in both. Post-translationally, phosphorylation sites are present in the extracellular medium. As to expression, expressed in the retina pigment epithelium (at protein level). Expressed in plasma (at protein level). Expressed in serum (at protein level).

It localises to the secreted. Its subcellular location is the extracellular space. It is found in the parasitophorous vacuole. Vitronectin is a cell adhesion and spreading factor found in serum and tissues. Vitronectin interact with glycosaminoglycans and proteoglycans. Is recognized by certain members of the integrin family and serves as a cell-to-substrate adhesion molecule. Inhibitor of the membrane-damaging effect of the terminal cytolytic complement pathway. Functionally, somatomedin-B is a growth hormone-dependent serum factor with protease-inhibiting activity. This is Vitronectin (VTN) from Homo sapiens (Human).